Here is a 519-residue protein sequence, read N- to C-terminus: Arabinose import ATP-binding protein AraG 2 (519 aa).

ABC transporter domains lie at 29 to 264 (LSLD…MVGR) and 264 to 515 (RSIE…LIKL). 61–68 (GENGAGKS) serves as a coordination point for ATP.

The protein belongs to the ABC transporter superfamily. Arabinose importer (TC 3.A.1.2.2) family. As to quaternary structure, the complex is composed of two ATP-binding proteins (AraG), two transmembrane proteins (AraH) and a solute-binding protein (AraF).

It localises to the cell inner membrane. The catalysed reaction is L-arabinose(out) + ATP + H2O = L-arabinose(in) + ADP + phosphate + H(+). Its function is as follows. Part of the ABC transporter complex AraFGH involved in arabinose import. Responsible for energy coupling to the transport system. In Burkholderia ambifaria (strain ATCC BAA-244 / DSM 16087 / CCUG 44356 / LMG 19182 / AMMD) (Burkholderia cepacia (strain AMMD)), this protein is Arabinose import ATP-binding protein AraG 2.